We begin with the raw amino-acid sequence, 353 residues long: B1 bradykinin receptor (353 aa).

The Extracellular segment spans residues 1–41 (MASQTLVVFQASNQSQLPPPNATLCDGAQEAWHLLHKVLPT). Asparagine 13 and asparagine 21 each carry an N-linked (GlcNAc...) asparagine glycan. Residues 42–62 (CVVAICSGGLLGNLFVLSVFL) form a helical membrane-spanning segment. At 63 to 72 (VPRRRLNAAE) the chain is on the cytoplasmic side. The helical transmembrane segment at 73 to 93 (IYLAHLAASDLVFALGLPFWA) threads the bilayer. Topologically, residues 94 to 110 (ETIRNGFHWPFGAPLCR) are extracellular. Cysteine 109 and cysteine 189 form a disulfide bridge. Residues 111–131 (VVNGVIKANLFISIFLVVAIS) traverse the membrane as a helical segment. Topologically, residues 132 to 154 (RDRYRALVHPVASWRRRRRRHWA) are cytoplasmic. A helical membrane pass occupies residues 155–175 (QATCVLIWTAGGLLSIPTFLL). Topologically, residues 176–207 (RSVQVVPELNVSACVLPFPHEAWAFVRTVELN) are extracellular. An N-linked (GlcNAc...) asparagine glycan is attached at asparagine 185. A helical transmembrane segment spans residues 208–228 (VLGFLLPLAAILFFNYHILAA). At 229–251 (LRGREQLSRTRCGGPRDGKTTAL) the chain is on the cytoplasmic side. A helical transmembrane segment spans residues 252–272 (ILTLVAVFLLCWTPYHVCAFL). The Extracellular segment spans residues 273 to 295 (EFLLHVRAIRGCFWEDFTDLGLQ). The chain crosses the membrane as a helical span at residues 296–316 (YTNFFAFINSCLNPVIYVFWG). The Cytoplasmic segment spans residues 317–353 (QLFRTKIWELYHRCLPRKLTAVSSSRRKEIFQIFWRN). The S-palmitoyl cysteine moiety is linked to residue cysteine 330.

Belongs to the G-protein coupled receptor 1 family. Bradykinin receptor subfamily. BDKRB1 sub-subfamily.

Its subcellular location is the cell membrane. Its function is as follows. This is a receptor for bradykinin. Could be a factor in chronic pain and inflammation. The protein is B1 bradykinin receptor (BDKRB1) of Sus scrofa (Pig).